Reading from the N-terminus, the 156-residue chain is Ribosomal RNA large subunit methyltransferase H (156 aa).

Residues Leu73, Gly104, and 123–128 (LSAMTL) contribute to the S-adenosyl-L-methionine site.

Belongs to the RNA methyltransferase RlmH family. Homodimer.

It is found in the cytoplasm. The enzyme catalyses pseudouridine(1915) in 23S rRNA + S-adenosyl-L-methionine = N(3)-methylpseudouridine(1915) in 23S rRNA + S-adenosyl-L-homocysteine + H(+). Its function is as follows. Specifically methylates the pseudouridine at position 1915 (m3Psi1915) in 23S rRNA. The polypeptide is Ribosomal RNA large subunit methyltransferase H (Laribacter hongkongensis (strain HLHK9)).